Consider the following 129-residue polypeptide: Lysozyme C-3 (129 aa).

In terms of domain architecture, C-type lysozyme spans Lys1–Leu129. 4 disulfides stabilise this stretch: Cys6-Cys127, Cys30-Cys115, Cys64-Cys80, and Cys76-Cys94. Catalysis depends on residues Glu35 and Asp52.

This sequence belongs to the glycosyl hydrolase 22 family.

Its subcellular location is the secreted. It catalyses the reaction Hydrolysis of (1-&gt;4)-beta-linkages between N-acetylmuramic acid and N-acetyl-D-glucosamine residues in a peptidoglycan and between N-acetyl-D-glucosamine residues in chitodextrins.. Its function is as follows. Lysozymes have primarily a bacteriolytic function; those in tissues and body fluids are associated with the monocyte-macrophage system and enhance the activity of immunoagents. The sequence is that of Lysozyme C-3 from Anas platyrhynchos (Mallard).